A 336-amino-acid chain; its full sequence is Tetraacyldisaccharide 4'-kinase (336 aa).

Residue 60–67 (TAGGNGKT) participates in ATP binding.

Belongs to the LpxK family.

The catalysed reaction is a lipid A disaccharide + ATP = a lipid IVA + ADP + H(+). The protein operates within glycolipid biosynthesis; lipid IV(A) biosynthesis; lipid IV(A) from (3R)-3-hydroxytetradecanoyl-[acyl-carrier-protein] and UDP-N-acetyl-alpha-D-glucosamine: step 6/6. In terms of biological role, transfers the gamma-phosphate of ATP to the 4'-position of a tetraacyldisaccharide 1-phosphate intermediate (termed DS-1-P) to form tetraacyldisaccharide 1,4'-bis-phosphate (lipid IVA). The polypeptide is Tetraacyldisaccharide 4'-kinase (Vibrio cholerae serotype O1 (strain ATCC 39315 / El Tor Inaba N16961)).